A 325-amino-acid chain; its full sequence is Phospho-N-acetylmuramoyl-pentapeptide-transferase (325 aa).

10 consecutive transmembrane segments (helical) span residues 5-25 (VLLL…PIFI), 57-77 (LMIL…LSIF), 81-101 (VLLL…DDFI), 117-137 (LIGQ…MGLS), 146-166 (SLSI…LVGA), 178-198 (GLVA…AWAT), 200-220 (YFEV…FLVF), 227-247 (VFMG…IAIM), 252-272 (ILLI…IIQV), and 304-324 (VTFW…EVWI).

This sequence belongs to the glycosyltransferase 4 family. MraY subfamily. Mg(2+) serves as cofactor.

The protein localises to the cell membrane. The enzyme catalyses UDP-N-acetyl-alpha-D-muramoyl-L-alanyl-gamma-D-glutamyl-meso-2,6-diaminopimeloyl-D-alanyl-D-alanine + di-trans,octa-cis-undecaprenyl phosphate = di-trans,octa-cis-undecaprenyl diphospho-N-acetyl-alpha-D-muramoyl-L-alanyl-D-glutamyl-meso-2,6-diaminopimeloyl-D-alanyl-D-alanine + UMP. It functions in the pathway cell wall biogenesis; peptidoglycan biosynthesis. Its function is as follows. Catalyzes the initial step of the lipid cycle reactions in the biosynthesis of the cell wall peptidoglycan: transfers peptidoglycan precursor phospho-MurNAc-pentapeptide from UDP-MurNAc-pentapeptide onto the lipid carrier undecaprenyl phosphate, yielding undecaprenyl-pyrophosphoryl-MurNAc-pentapeptide, known as lipid I. The polypeptide is Phospho-N-acetylmuramoyl-pentapeptide-transferase (Halalkalibacterium halodurans (strain ATCC BAA-125 / DSM 18197 / FERM 7344 / JCM 9153 / C-125) (Bacillus halodurans)).